Here is an 85-residue protein sequence, read N- to C-terminus: Conotoxin Lt28.5 (85 aa).

A signal peptide spans 1-21; sequence MPKLEMMLLVLLILPLCYIDA. Residues 22-40 constitute a propeptide that is removed on maturation; it reads VGPPPPWNMEDEIIEHWQK.

It belongs to the conotoxin D superfamily. Post-translationally, contains 5 disulfide bonds. Expressed by the venom duct.

Its subcellular location is the secreted. In terms of biological role, probable neurotoxin. This Conus litteratus (Lettered cone) protein is Conotoxin Lt28.5.